We begin with the raw amino-acid sequence, 872 residues long: Alanine--tRNA ligase (872 aa).

Zn(2+)-binding residues include H567, H571, C669, and H673.

Belongs to the class-II aminoacyl-tRNA synthetase family. Requires Zn(2+) as cofactor.

The protein resides in the cytoplasm. It catalyses the reaction tRNA(Ala) + L-alanine + ATP = L-alanyl-tRNA(Ala) + AMP + diphosphate. Its function is as follows. Catalyzes the attachment of alanine to tRNA(Ala) in a two-step reaction: alanine is first activated by ATP to form Ala-AMP and then transferred to the acceptor end of tRNA(Ala). Also edits incorrectly charged Ser-tRNA(Ala) and Gly-tRNA(Ala) via its editing domain. This Streptococcus sanguinis (strain SK36) protein is Alanine--tRNA ligase.